A 90-amino-acid polypeptide reads, in one-letter code: Small ribosomal subunit protein uS15c (90 aa).

It belongs to the universal ribosomal protein uS15 family. As to quaternary structure, part of the 30S ribosomal subunit.

It localises to the plastid. The protein resides in the chloroplast. The protein is Small ribosomal subunit protein uS15c (rps15) of Piper cenocladum (Ant piper).